The chain runs to 284 residues: tRNA pseudouridine synthase A (284 aa).

Residue aspartate 52 is the Nucleophile of the active site. Tyrosine 149 lines the substrate pocket.

This sequence belongs to the tRNA pseudouridine synthase TruA family. In terms of assembly, homodimer.

It catalyses the reaction uridine(38/39/40) in tRNA = pseudouridine(38/39/40) in tRNA. Formation of pseudouridine at positions 38, 39 and 40 in the anticodon stem and loop of transfer RNAs. This chain is tRNA pseudouridine synthase A, found in Orientia tsutsugamushi (strain Boryong) (Rickettsia tsutsugamushi).